The following is a 438-amino-acid chain: Trigger factor (438 aa).

One can recognise a PPIase FKBP-type domain in the interval 163–248 (GDTAIIDFAG…VKEIKRKEIA (86 aa)).

The protein belongs to the FKBP-type PPIase family. Tig subfamily.

Its subcellular location is the cytoplasm. It carries out the reaction [protein]-peptidylproline (omega=180) = [protein]-peptidylproline (omega=0). Functionally, involved in protein export. Acts as a chaperone by maintaining the newly synthesized protein in an open conformation. Functions as a peptidyl-prolyl cis-trans isomerase. This Pelotomaculum thermopropionicum (strain DSM 13744 / JCM 10971 / SI) protein is Trigger factor.